We begin with the raw amino-acid sequence, 712 residues long: Auxin response factor 15 (712 aa).

Residues 142 to 244 (FCKTLTASDT…ELRLGVRRAA (103 aa)) constitute a DNA-binding region (TF-B3).

It belongs to the ARF family. As to quaternary structure, homo and heterodimers. Expressed in roots, culms, leaves and young panicles.

The protein localises to the nucleus. Its function is as follows. Auxin response factors (ARFs) are transcriptional factors that bind specifically to the DNA sequence 5'-TGTCTC-3' found in the auxin-responsive promoter elements (AuxREs). The protein is Auxin response factor 15 (ARF15) of Oryza sativa subsp. japonica (Rice).